Consider the following 163-residue polypeptide: Gas vesicle protein H2 (163 aa).

The tract at residues 57 to 92 (LGSDARSPSTPAGNADDAGDAETAHIETRASDDSDD) is disordered. The span at 78–88 (ETAHIETRASD) shows a compositional bias: basic and acidic residues.

This sequence belongs to the gas vesicle GvpH family. GvpF to GvpM interact with each other in vitro, and may form multi-subunit complex(es). Interacts with GvpC. Might interact with GvpA.

Its subcellular location is the gas vesicle. The protein resides in the cytoplasm. Functionally, a minor component of the gas vesicle, also found in soluble extracts. Proteins GvpF to GvpM might be involved in nucleating gas vesicle formation. Gas vesicles are hollow, gas filled proteinaceous nanostructures found in several microbial planktonic microorganisms. They allow positioning of halobacteria at the optimal depth for growth in the poorly aerated, shallow brine pools of their habitat. Expression of 2 c-vac DNA fragments containing 2 divergently transcribed regions (gvpE-gvpF-gvpG-gvpH-gvpI-gvpJ-gvpK-gvpL-gvpM and gvpA-gvpC-gvpN-gvpO) allows H.volcanii to produce gas vesicles. The polypeptide is Gas vesicle protein H2 (Halobacterium salinarum (strain ATCC 700922 / JCM 11081 / NRC-1) (Halobacterium halobium)).